We begin with the raw amino-acid sequence, 422 residues long: Ubiquitin-conjugating enzyme E2 Q1 (422 aa).

Met-1 carries the N-acetylmethionine modification. A compositionally biased stretch (low complexity) spans Met-1 to Gly-15. Disordered regions lie at residues Met-1–Cys-40 and Pro-174–Gly-221. The span at Gln-16–Pro-35 shows a compositional bias: gly residues. The span at Val-185–Asp-200 shows a compositional bias: acidic residues. Residues Ala-212 to Gly-221 are compositionally biased toward basic and acidic residues. In terms of domain architecture, UBC core spans Gln-251 to Tyr-415. The active-site Glycyl thioester intermediate is the Cys-351.

Belongs to the ubiquitin-conjugating enzyme family. As to quaternary structure, monomer and homodimer. Only the homodimer is linked to ubiquitin through thiolester activation. Interacts (via N-terminus) with B4GALT1 (via N-terminal cytoplasmic domain). The interaction is direct. In terms of processing, autoubiquitinated in vitro in the presence of NEDD4L. Widely expressed.

It localises to the nucleus. Its subcellular location is the cell projection. It is found in the filopodium. The protein resides in the cytoplasm. The protein localises to the cytosol. It catalyses the reaction S-ubiquitinyl-[E1 ubiquitin-activating enzyme]-L-cysteine + [E2 ubiquitin-conjugating enzyme]-L-cysteine = [E1 ubiquitin-activating enzyme]-L-cysteine + S-ubiquitinyl-[E2 ubiquitin-conjugating enzyme]-L-cysteine.. The protein operates within protein modification; protein ubiquitination. Catalyzes the covalent attachment of ubiquitin to other proteins. May be involved in hormonal homeostasis in females. Involved in regulation of B4GALT1 cell surface expression, B4GALT1-mediated cell adhesion to laminin and embryoid body formation. This chain is Ubiquitin-conjugating enzyme E2 Q1 (UBE2Q1), found in Homo sapiens (Human).